A 612-amino-acid chain; its full sequence is Dihydroxy-acid dehydratase (612 aa).

A Mg(2+)-binding site is contributed by aspartate 81. [2Fe-2S] cluster is bound at residue cysteine 122. Residues aspartate 123 and lysine 124 each coordinate Mg(2+). Lysine 124 carries the N6-carboxylysine modification. Residue cysteine 195 coordinates [2Fe-2S] cluster. Glutamate 491 is a Mg(2+) binding site. Residue serine 517 is the Proton acceptor of the active site.

This sequence belongs to the IlvD/Edd family. In terms of assembly, homodimer. [2Fe-2S] cluster is required as a cofactor. It depends on Mg(2+) as a cofactor.

The enzyme catalyses (2R)-2,3-dihydroxy-3-methylbutanoate = 3-methyl-2-oxobutanoate + H2O. It catalyses the reaction (2R,3R)-2,3-dihydroxy-3-methylpentanoate = (S)-3-methyl-2-oxopentanoate + H2O. Its pathway is amino-acid biosynthesis; L-isoleucine biosynthesis; L-isoleucine from 2-oxobutanoate: step 3/4. The protein operates within amino-acid biosynthesis; L-valine biosynthesis; L-valine from pyruvate: step 3/4. In terms of biological role, functions in the biosynthesis of branched-chain amino acids. Catalyzes the dehydration of (2R,3R)-2,3-dihydroxy-3-methylpentanoate (2,3-dihydroxy-3-methylvalerate) into 2-oxo-3-methylpentanoate (2-oxo-3-methylvalerate) and of (2R)-2,3-dihydroxy-3-methylbutanoate (2,3-dihydroxyisovalerate) into 2-oxo-3-methylbutanoate (2-oxoisovalerate), the penultimate precursor to L-isoleucine and L-valine, respectively. In Rhizobium etli (strain ATCC 51251 / DSM 11541 / JCM 21823 / NBRC 15573 / CFN 42), this protein is Dihydroxy-acid dehydratase.